The sequence spans 90 residues: Small ribosomal subunit protein uS15 (90 aa).

This sequence belongs to the universal ribosomal protein uS15 family. As to quaternary structure, part of the 30S ribosomal subunit. Forms a bridge to the 50S subunit in the 70S ribosome, contacting the 23S rRNA.

Its function is as follows. One of the primary rRNA binding proteins, it binds directly to 16S rRNA where it helps nucleate assembly of the platform of the 30S subunit by binding and bridging several RNA helices of the 16S rRNA. Forms an intersubunit bridge (bridge B4) with the 23S rRNA of the 50S subunit in the ribosome. This chain is Small ribosomal subunit protein uS15, found in Wolbachia sp. subsp. Brugia malayi (strain TRS).